The sequence spans 98 residues: Small ribosomal subunit protein bS6 (98 aa).

It belongs to the bacterial ribosomal protein bS6 family.

Its function is as follows. Binds together with bS18 to 16S ribosomal RNA. The sequence is that of Small ribosomal subunit protein bS6 from Levilactobacillus brevis (strain ATCC 367 / BCRC 12310 / CIP 105137 / JCM 1170 / LMG 11437 / NCIMB 947 / NCTC 947) (Lactobacillus brevis).